A 2766-amino-acid chain; its full sequence is PDZ domain-containing protein 2 (2766 aa).

The PDZ 1 domain occupies 85–177 (LSFGNIPVFG…GGFIYLIMLR (93 aa)). Disordered stretches follow at residues 189–315 (GNSG…KTGK) and 419–452 (MPGS…KLKS). Acidic residues predominate over residues 242–254 (TADDPNSELENGA). The segment covering 280 to 296 (HLERSEADSEVELRVPK) has biased composition (basic and acidic residues). The region spanning 334–419 (KMELLKESDG…MVQLVVASKM (86 aa)) is the PDZ 2 domain. At serine 517 the chain carries Phosphoserine. Residues 535 to 621 (IIGLYKEKGK…GLFVLTVRTK (87 aa)) form the PDZ 3 domain. A compositionally biased stretch (polar residues) spans 627–636 (LTPCSTPTHM). The tract at residues 627 to 673 (LTPCSTPTHMSRSSSPSFNTNSGGTPAGGGQEEGGSSSLGRKAPGPK) is disordered. Residues 637–650 (SRSSSPSFNTNSGG) show a composition bias toward low complexity. The 86-residue stretch at 679 to 764 (EVTLNKEPRV…GPVRLVIGRH (86 aa)) folds into the PDZ 4 domain. The span at 783–794 (YQESREANSSPG) shows a compositional bias: polar residues. Disordered regions lie at residues 783–803 (YQES…KSPS) and 834–853 (AGSE…EDGS). 2 positions are modified to phosphoserine: serine 891 and serine 895. 10 disordered regions span residues 915-966 (NGGS…KQEE), 990-1425 (HSIL…PSVL), 1456-1531 (ISLS…CPGT), 1725-1909 (DSQG…LPEQ), 1924-1967 (DTSC…IRQS), 2015-2070 (ERVP…ASQV), 2146-2174 (FSSH…AMGG), 2262-2397 (DRPT…ERRT), 2424-2450 (QLEI…GHAD), and 2465-2496 (TRAY…WATP). Residues 918-927 (SDDEDFDGEG) are compositionally biased toward acidic residues. Basic and acidic residues predominate over residues 1021 to 1038 (GRKEMSGSRSSPKLEYRV). 3 stretches are compositionally biased toward polar residues: residues 1040 to 1061 (TDTQ…SENL), 1126 to 1137 (PGDSSVPTNCGP), and 1189 to 1220 (SETP…SQGI). Low complexity-rich tracts occupy residues 1379–1393 (SQPP…SHHA) and 1456–1471 (ISLS…SPSS). Serine 1767 is subject to Phosphoserine. The segment covering 1797–1806 (CSPKLKRLNS) has biased composition (basic residues). Polar residues predominate over residues 1884-1901 (LRTSASDTSIRTFTSPLT). Composition is skewed to low complexity over residues 1924 to 1937 (DTSC…PRSG) and 1947 to 1963 (SGSA…ALAG). 2 stretches are compositionally biased toward low complexity: residues 2280 to 2296 (PPIN…GSPS) and 2305 to 2321 (RSLS…SSLL). Polar residues-rich tracts occupy residues 2322–2347 (PQMT…SNKG) and 2362–2372 (PTSTVSPASPS). A PDZ 5 domain is found at 2550–2634 (FIVLNKKEGS…HKHALMIIKK (85 aa)). A disordered region spans residues 2635-2667 (GNDQPGPSFKQEPPSANGKGPFPRRTLPLEPGA). In terms of domain architecture, PDZ 6 spans 2678 to 2763 (CVEVLKTSAG…GPVQLVIRKH (86 aa)).

In terms of assembly, interacts with SCN10A, CTNND2 and PKP4. Post-translationally, a secreted form is produced by caspase-mediated proteolytic cleavage. As to expression, expressed in the heart, liver, brain, spleen, lung, kidney, testis and skeletal muscle.

Its subcellular location is the nucleus. It is found in the cytoplasm. The protein resides in the endoplasmic reticulum. The protein localises to the cell junction. It localises to the secreted. The polypeptide is PDZ domain-containing protein 2 (Pdzd2) (Rattus norvegicus (Rat)).